A 419-amino-acid polypeptide reads, in one-letter code: Serine hydroxymethyltransferase (419 aa).

Residues leucine 118 and 122 to 124 (GHL) contribute to the (6S)-5,6,7,8-tetrahydrofolate site. The residue at position 227 (lysine 227) is an N6-(pyridoxal phosphate)lysine.

The protein belongs to the SHMT family. As to quaternary structure, homodimer. Pyridoxal 5'-phosphate serves as cofactor.

Its subcellular location is the cytoplasm. The catalysed reaction is (6R)-5,10-methylene-5,6,7,8-tetrahydrofolate + glycine + H2O = (6S)-5,6,7,8-tetrahydrofolate + L-serine. It functions in the pathway one-carbon metabolism; tetrahydrofolate interconversion. It participates in amino-acid biosynthesis; glycine biosynthesis; glycine from L-serine: step 1/1. In terms of biological role, catalyzes the reversible interconversion of serine and glycine with tetrahydrofolate (THF) serving as the one-carbon carrier. This reaction serves as the major source of one-carbon groups required for the biosynthesis of purines, thymidylate, methionine, and other important biomolecules. Also exhibits THF-independent aldolase activity toward beta-hydroxyamino acids, producing glycine and aldehydes, via a retro-aldol mechanism. This Chloroflexus aurantiacus (strain ATCC 29364 / DSM 637 / Y-400-fl) protein is Serine hydroxymethyltransferase.